A 901-amino-acid polypeptide reads, in one-letter code: Probable inorganic carbon transporter subunit DabA (901 aa).

Residues C424, D426, H606, and C621 each coordinate Zn(2+).

The protein belongs to the inorganic carbon transporter (TC 9.A.2) DabA family. Forms a complex with DabB. Zn(2+) is required as a cofactor.

It is found in the cell membrane. Functionally, part of an energy-coupled inorganic carbon pump. The polypeptide is Probable inorganic carbon transporter subunit DabA (Staphylococcus aureus (strain Mu3 / ATCC 700698)).